A 76-amino-acid polypeptide reads, in one-letter code: Translation initiation factor IF-1 (76 aa).

One can recognise an S1-like domain in the interval 1 to 76 (MEDMAKKDGV…TRGRIVYRYK (76 aa)).

It belongs to the IF-1 family. In terms of assembly, component of the 30S ribosomal translation pre-initiation complex which assembles on the 30S ribosome in the order IF-2 and IF-3, IF-1 and N-formylmethionyl-tRNA(fMet); mRNA recruitment can occur at any time during PIC assembly.

The protein localises to the cytoplasm. Its function is as follows. One of the essential components for the initiation of protein synthesis. Stabilizes the binding of IF-2 and IF-3 on the 30S subunit to which N-formylmethionyl-tRNA(fMet) subsequently binds. Helps modulate mRNA selection, yielding the 30S pre-initiation complex (PIC). Upon addition of the 50S ribosomal subunit IF-1, IF-2 and IF-3 are released leaving the mature 70S translation initiation complex. The polypeptide is Translation initiation factor IF-1 (Renibacterium salmoninarum (strain ATCC 33209 / DSM 20767 / JCM 11484 / NBRC 15589 / NCIMB 2235)).